The sequence spans 106 residues: Large ribosomal subunit protein eL42 (106 aa).

Positions 26–53 (YKKGKDSLYAQGKRRYDRKQSGYGGQTK) are disordered.

The protein belongs to the eukaryotic ribosomal protein eL42 family. Component of the large ribosomal subunit.

It is found in the cytoplasm. Its function is as follows. Component of the large ribosomal subunit. The ribosome is a large ribonucleoprotein complex responsible for the synthesis of proteins in the cell. In Danio rerio (Zebrafish), this protein is Large ribosomal subunit protein eL42 (rpl36a).